The following is a 282-amino-acid chain: Protein-glutamine deamidase Cif (282 aa).

A translocation domain (TD) region spans residues 1-16; it reads MKDITLPPPTSASCLT. Residues cysteine 109, histidine 165, and glutamine 185 contribute to the active site.

It belongs to the Cif family.

It is found in the secreted. It localises to the host nucleus. The catalysed reaction is L-glutaminyl-[protein] + H2O = L-glutamyl-[protein] + NH4(+). Protein-glutamine deamidase effector that inhibits the host cell cycle and other key cellular processes such as the actin network and programmed-cell death. Acts by mediating the side chain deamidation of 'Gln-40' of host NEDD8, converting it to glutamate, thereby abolishing the activity of cullin-RING-based E3 ubiquitin-protein ligase complexes (CRL complexes). Inactivation of CRL complexes prevents ubiquitination and subsequent degradation of the cyclin-dependent kinase inhibitors CDKN1A/p21 and CDKN1B/p27, leading to G1 and G2 cell cycle arrests in host cells. Also able to catalyze deamidation of 'Gln-40' of host ubiquitin in vitro; however, NEDD8 constitutes the preferred substrate in vivo. This chain is Protein-glutamine deamidase Cif, found in Escherichia coli.